The chain runs to 785 residues: Hyperosmolality-gated Ca2+ permeable channel 1.7 (785 aa).

Residues 7-27 (IGLSAAINLLSAFAFLFAFAM) form a helical membrane-spanning segment. Residue Ser54 is modified to Phosphoserine. 9 consecutive transmembrane segments (helical) span residues 101 to 121 (IYLL…GVLV), 156 to 176 (FWAH…ILYM), 373 to 393 (LLTT…IAFV), 425 to 445 (FLPG…LMTM), 465 to 485 (YFWF…TAFQ), 510 to 530 (ATFF…AEIL), 582 to 602 (AVAP…YVVF), 628 to 648 (LIIC…TKKF), and 651 to 671 (VTAL…YCAG). The disordered stretch occupies residues 725–761 (VDEEESNPLVRTKRTSQGTTRYNSEASSSATTTPVAN). Positions 739 to 761 (TSQGTTRYNSEASSSATTTPVAN) are enriched in polar residues.

Belongs to the CSC1 (TC 1.A.17) family. Phosphorylated and activated by BIK1.

Its subcellular location is the membrane. It catalyses the reaction Ca(2+)(in) = Ca(2+)(out). Functionally, calcium-permeable channel involved in plant stomatal immunity. In Arabidopsis thaliana (Mouse-ear cress), this protein is Hyperosmolality-gated Ca2+ permeable channel 1.7.